The primary structure comprises 339 residues: Homeobox protein Hox-D13 (339 aa).

The tract at residues 1–33 is disordered; it reads MSRSGTWDMDGLRADGGAAGAAPASSSSSVAAP. A compositionally biased stretch (low complexity) spans 20–33; sequence GAAPASSSSSVAAP. The segment at residues 272-331 is a DNA-binding region (homeobox); the sequence is GRKKRVPYTKLQLKELENEYAINKFINKDKRRRISAATNLSERQVTIWFQNRRVKDKKIV.

It belongs to the Abd-B homeobox family.

The protein localises to the nucleus. Functionally, sequence-specific transcription factor that binds gene promoters and activates their transcription. Part of a developmental regulatory system that provides cells with specific positional identities on the anterior-posterior axis. The polypeptide is Homeobox protein Hox-D13 (Hoxd13) (Mus musculus (Mouse)).